A 327-amino-acid polypeptide reads, in one-letter code: Aldo/keto reductase slr0942 (327 aa).

18 to 27 (GEQIPALGLG) is a binding site for NADP(+). Y57 (proton donor) is an active-site residue. H119 serves as a coordination point for substrate. Residue 216–280 (SPLGSGDRPA…SVNPERLEQN (65 aa)) participates in NADP(+) binding.

This sequence belongs to the aldo/keto reductase family. In terms of assembly, monomer.

It carries out the reaction a secondary alcohol + NADP(+) = a ketone + NADPH + H(+). With respect to regulation, curcumin non-competitively inhibits the enzyme with respect to furfural. To a lesser extent, enzyme activity is also inhibited by indomethacin, coumarate, coumarin, and alrestatin. Aldo/keto reductase with broad substrate spectrum. Catalyzes the NADPH-dependent reduction of aldehyde- and ketone-groups of different classes of carbonyl compounds to the corresponding alcohols. Highest enzymatic efficiency is observed with 4-oxonon-2-enal (4-ONE) and 4-hydroxynon-2-enal (4-HNE), that are lipid peroxidation products, and 9,10-phenanthrenequinone (9,10-PQ), a photoproduct of phenanthrene that is one of the most prevalent polycyclic aromatic hydrocarbons in the environment. Is also active on sugar-derived reactive carbonyls such as methylglyoxal (MG), glyoxal and 3-deoxyglucosone (3-DG), and on other lipid-derived carbonyls such as acrolein. May be involved in the detoxification of the toxic lipid peroxidation products 4-ONE and 4-HNE besides many other exo- and endogenic reactive carbonyl compounds (RCs) that may lead to photoinhibition or other cell damages. The sequence is that of Aldo/keto reductase slr0942 from Synechocystis sp. (strain ATCC 27184 / PCC 6803 / Kazusa).